Here is a 293-residue protein sequence, read N- to C-terminus: 4-hydroxy-tetrahydrodipicolinate synthase (293 aa).

Thr47 lines the pyruvate pocket. The active-site Proton donor/acceptor is the Tyr136. Catalysis depends on Lys164, which acts as the Schiff-base intermediate with substrate. A pyruvate-binding site is contributed by Ile206.

It belongs to the DapA family. As to quaternary structure, homotetramer; dimer of dimers.

The protein localises to the cytoplasm. It catalyses the reaction L-aspartate 4-semialdehyde + pyruvate = (2S,4S)-4-hydroxy-2,3,4,5-tetrahydrodipicolinate + H2O + H(+). Its pathway is amino-acid biosynthesis; L-lysine biosynthesis via DAP pathway; (S)-tetrahydrodipicolinate from L-aspartate: step 3/4. Its function is as follows. Catalyzes the condensation of (S)-aspartate-beta-semialdehyde [(S)-ASA] and pyruvate to 4-hydroxy-tetrahydrodipicolinate (HTPA). The chain is 4-hydroxy-tetrahydrodipicolinate synthase from Listeria welshimeri serovar 6b (strain ATCC 35897 / DSM 20650 / CCUG 15529 / CIP 8149 / NCTC 11857 / SLCC 5334 / V8).